The primary structure comprises 448 residues: Argininosuccinate synthase (448 aa).

ATP-binding positions include 17-25 (AFSGGLDTS) and Ala43. Tyr99 contacts L-citrulline. 2 residues coordinate ATP: Gly129 and Thr131. L-aspartate contacts are provided by Thr131, Asn135, and Asp136. Asn135 lines the L-citrulline pocket. Asp136 is an ATP binding site. Arg139 and Ser192 together coordinate L-citrulline. Asp194 is a binding site for ATP. 3 residues coordinate L-citrulline: Thr201, Glu203, and Glu280.

It belongs to the argininosuccinate synthase family. Type 2 subfamily. As to quaternary structure, homotetramer.

It is found in the cytoplasm. It carries out the reaction L-citrulline + L-aspartate + ATP = 2-(N(omega)-L-arginino)succinate + AMP + diphosphate + H(+). Its pathway is amino-acid biosynthesis; L-arginine biosynthesis; L-arginine from L-ornithine and carbamoyl phosphate: step 2/3. This is Argininosuccinate synthase from Acidovorax ebreus (strain TPSY) (Diaphorobacter sp. (strain TPSY)).